Consider the following 150-residue polypeptide: uncharacterized protein (150 aa).

To A.tumefaciens conjugal transfer protein TraB.

This is an uncharacterized protein from Agrobacterium tumefaciens (strain 15955).